The chain runs to 323 residues: MDPKSQRVKFNDGHFIPVLGFGTYAPEEVPKSEALEATKFAIEVGFRHVDSAHLYQNEEQVGQAIRSKIADGTVKREDIFYTSKLWCNSLQPELVRPALEKSLQNLQLDYVDLYIIHSPVSLKPGNKFVPKDESGKLIFDSVDLCHTWEALEKCKDAGLTKSIGVSNFNHKQLEKILNKPGLKYKPVCNQVECHPYLNQSKLLEFCKSHDIVLVAYAALGAQLLSEWVNSNNPVLLEDPVLCAIAKKHKQTPALVALRYQVQRGVVVLAKSFNKKRIKENMQVFDFELTPEDMKAIDGLNRNTRYYDFQQGIGHPEYPFSEEY.

NADP(+)-binding positions include 20–24 (GFGTY) and Asp-50. The active-site Proton donor is the Tyr-55. His-117 is a substrate binding site. NADP(+) contacts are provided by residues 166-167 (SN), Gln-190, 216-221 (YAALGA), and 270-280 (KSFNKKRIKEN).

The protein belongs to the aldo/keto reductase family. As to quaternary structure, monomer.

It is found in the cytoplasm. It carries out the reaction prostaglandin F2alpha + NADP(+) = prostaglandin D2 + NADPH + H(+). The protein operates within lipid metabolism; prostaglandin biosynthesis. Functionally, catalyzes the reduction of PGD(2) and PGH(2) to PGF(2 alpha) and a stereoisomer, respectively. It has a broad substrate specificity and also reduces other carbonyl compounds. The chain is Prostaglandin F synthase 2 from Bos taurus (Bovine).